The primary structure comprises 515 residues: Bifunctional purine biosynthesis protein PurH (515 aa).

The MGS-like domain maps to 1 to 145 (MTKRALISVS…KNHASVTVVV (145 aa)).

Belongs to the PurH family.

It carries out the reaction (6R)-10-formyltetrahydrofolate + 5-amino-1-(5-phospho-beta-D-ribosyl)imidazole-4-carboxamide = 5-formamido-1-(5-phospho-D-ribosyl)imidazole-4-carboxamide + (6S)-5,6,7,8-tetrahydrofolate. The catalysed reaction is IMP + H2O = 5-formamido-1-(5-phospho-D-ribosyl)imidazole-4-carboxamide. Its pathway is purine metabolism; IMP biosynthesis via de novo pathway; 5-formamido-1-(5-phospho-D-ribosyl)imidazole-4-carboxamide from 5-amino-1-(5-phospho-D-ribosyl)imidazole-4-carboxamide (10-formyl THF route): step 1/1. It functions in the pathway purine metabolism; IMP biosynthesis via de novo pathway; IMP from 5-formamido-1-(5-phospho-D-ribosyl)imidazole-4-carboxamide: step 1/1. The sequence is that of Bifunctional purine biosynthesis protein PurH from Streptococcus pyogenes serotype M12 (strain MGAS2096).